The following is a 377-amino-acid chain: Aspartate aminotransferase (377 aa).

Residues glycine 37, tryptophan 123, and asparagine 173 each contribute to the L-aspartate site. Lysine 234 carries the N6-(pyridoxal phosphate)lysine modification. Residue arginine 353 participates in L-aspartate binding.

It belongs to the class-I pyridoxal-phosphate-dependent aminotransferase family. As to quaternary structure, homodimer. It depends on pyridoxal 5'-phosphate as a cofactor.

Its subcellular location is the cytoplasm. The enzyme catalyses L-aspartate + 2-oxoglutarate = oxaloacetate + L-glutamate. This Thermotoga maritima (strain ATCC 43589 / DSM 3109 / JCM 10099 / NBRC 100826 / MSB8) protein is Aspartate aminotransferase (aspC).